A 1274-amino-acid chain; its full sequence is Myosin-binding protein C, cardiac-type (1274 aa).

M1 is modified (N-acetylmethionine). In terms of domain architecture, Ig-like C2-type 1 spans 8–95 (PVSAFTKKPR…SKVKFDLKVT (88 aa)). S47 carries the phosphoserine modification. Over residues 95 to 104 (TEPAPPEKAE) the composition is skewed to basic and acidic residues. Positions 95-153 (TEPAPPEKAESAVAPTSMEAPETPKEVPALATQLEGNVSSPEGSVSVTQDGSVAGSQGA) are disordered. At T117 the chain carries Phosphothreonine. Polar residues predominate over residues 128–149 (LEGNVSSPEGSVSVTQDGSVAG). One can recognise an Ig-like C2-type 2 domain in the interval 157–259 (PIGLFLMRPQ…KFDSCNFNLT (103 aa)). Residues Q212, H214, E227, and H229 each contribute to the Zn(2+) site. S279 carries the phosphoserine modification. T287 is modified (phosphothreonine; by PKA and PKC). S288 is modified (phosphoserine). S307 is modified (phosphoserine; by PKA). A phosphoserine mark is found at S312 and S427. 2 consecutive Ig-like C2-type domains span residues 361–452 (KKST…VKEP) and 452–546 (PPVL…KKLE). A disulfide bridge links C436 with C443. A phosphoserine mark is found at S459 and S550. Position 607 is a phosphothreonine (T607). The 121-residue stretch at 645–765 (PKIHLDCPGS…PVGEDQVNLT (121 aa)) folds into the Ig-like C2-type 5 domain. 2 consecutive Fibronectin type-III domains span residues 774 to 870 (APAA…IGPP) and 872 to 967 (EPTH…VQEI). Residues 971–1059 (PRLQLPRHLR…ENMEDKATLV (89 aa)) enclose the Ig-like C2-type 6 domain. The 96-residue stretch at 1068–1163 (PPLDIRVVET…TKEPIFIPRP (96 aa)) folds into the Fibronectin type-III 3 domain. One can recognise an Ig-like C2-type 7 domain in the interval 1181–1269 (PSFTQPLTNR…GEAQCECRLE (89 aa)). Position 1241 is an omega-N-methylarginine (R1241).

It belongs to the immunoglobulin superfamily. MyBP family. Substrate for phosphorylation by PKA and PKC. Reversible phosphorylation appears to modulate contraction. In terms of processing, polyubiquitinated.

Thick filament-associated protein located in the crossbridge region of vertebrate striated muscle a bands. In vitro it binds MHC, F-actin and native thin filaments, and modifies the activity of actin-activated myosin ATPase. It may modulate muscle contraction or may play a more structural role. The chain is Myosin-binding protein C, cardiac-type (Mybpc3) from Rattus norvegicus (Rat).